The sequence spans 589 residues: Probable translation initiation factor IF-2 (589 aa).

The tr-type G domain occupies 3–224; sequence VRSPFVVVMG…AGVSQRFIPR (222 aa). Residues 12 to 19 form a G1 region; the sequence is GHVDVGKT. 12 to 19 is a GTP binding site; that stretch reads GHVDVGKT. Residues 37-41 form a G2 region; it reads MITQH. Residues 78–81 form a G3 region; it reads DTPG. GTP-binding positions include 78–82 and 132–135; these read DTPGH and NKLD. The G4 stretch occupies residues 132 to 135; the sequence is NKLD. The interval 200–202 is G5; sequence SAV.

The protein belongs to the TRAFAC class translation factor GTPase superfamily. Classic translation factor GTPase family. IF-2 subfamily.

Functionally, function in general translation initiation by promoting the binding of the formylmethionine-tRNA to ribosomes. Seems to function along with eIF-2. In Pyrobaculum neutrophilum (strain DSM 2338 / JCM 9278 / NBRC 100436 / V24Sta) (Thermoproteus neutrophilus), this protein is Probable translation initiation factor IF-2.